We begin with the raw amino-acid sequence, 21 residues long: Nucleoside diphosphate kinase (21 aa).

Residue His4 is the Pros-phosphohistidine intermediate of the active site.

It belongs to the NDK family. As to quaternary structure, homohexamer. The cofactor is Mg(2+).

Its subcellular location is the cytoplasm. The catalysed reaction is a 2'-deoxyribonucleoside 5'-diphosphate + ATP = a 2'-deoxyribonucleoside 5'-triphosphate + ADP. It catalyses the reaction a ribonucleoside 5'-diphosphate + ATP = a ribonucleoside 5'-triphosphate + ADP. Functionally, major role in the synthesis of nucleoside triphosphates other than ATP. The ATP gamma phosphate is transferred to the NDP beta phosphate via a ping-pong mechanism, using a phosphorylated active-site intermediate. In Candida albicans (Yeast), this protein is Nucleoside diphosphate kinase (NDK1).